A 113-amino-acid chain; its full sequence is Large ribosomal subunit protein uL22 (113 aa).

It belongs to the universal ribosomal protein uL22 family. In terms of assembly, part of the 50S ribosomal subunit.

Functionally, this protein binds specifically to 23S rRNA; its binding is stimulated by other ribosomal proteins, e.g. L4, L17, and L20. It is important during the early stages of 50S assembly. It makes multiple contacts with different domains of the 23S rRNA in the assembled 50S subunit and ribosome. The globular domain of the protein is located near the polypeptide exit tunnel on the outside of the subunit, while an extended beta-hairpin is found that lines the wall of the exit tunnel in the center of the 70S ribosome. The polypeptide is Large ribosomal subunit protein uL22 (Bacillus thuringiensis subsp. konkukian (strain 97-27)).